We begin with the raw amino-acid sequence, 320 residues long: Methionyl-tRNA formyltransferase (320 aa).

A (6S)-5,6,7,8-tetrahydrofolate-binding site is contributed by 111-114 (SLLP).

Belongs to the Fmt family.

It carries out the reaction L-methionyl-tRNA(fMet) + (6R)-10-formyltetrahydrofolate = N-formyl-L-methionyl-tRNA(fMet) + (6S)-5,6,7,8-tetrahydrofolate + H(+). In terms of biological role, attaches a formyl group to the free amino group of methionyl-tRNA(fMet). The formyl group appears to play a dual role in the initiator identity of N-formylmethionyl-tRNA by promoting its recognition by IF2 and preventing the misappropriation of this tRNA by the elongation apparatus. The sequence is that of Methionyl-tRNA formyltransferase from Pediococcus pentosaceus (strain ATCC 25745 / CCUG 21536 / LMG 10740 / 183-1w).